We begin with the raw amino-acid sequence, 185 residues long: Ribosome-recycling factor (185 aa).

Belongs to the RRF family.

The protein resides in the cytoplasm. Its function is as follows. Responsible for the release of ribosomes from messenger RNA at the termination of protein biosynthesis. May increase the efficiency of translation by recycling ribosomes from one round of translation to another. The protein is Ribosome-recycling factor of Azotobacter vinelandii (strain DJ / ATCC BAA-1303).